Consider the following 273-residue polypeptide: Coiled-coil domain-containing protein 3 (273 aa).

The N-terminal stretch at 1–21 (MPLPLLLAALCLAASPAPARA) is a signal peptide. N-linked (GlcNAc...) asparagine glycosylation is present at Asn-100. Positions 188-250 (SVQKALFEEE…VNQKLNEKLG (63 aa)) form a coiled coil.

As to quaternary structure, homodimer. Post-translationally, N-glycosylated. In terms of tissue distribution, expressed in aorta and adipose tissue. Enriched in mature adipocytes. Over-expressed in adipose tissue from either hormonally-induced or nutritionally-regulated obese mice models.

The protein localises to the secreted. In terms of biological role, negatively regulates TNF-alpha-induced pro-inflammatory response in endothelial cells (ECs) via inhibition of TNF-alpha-induced NF-kappaB activation in ECs. Positively regulates lipid accumulation in adipose cells. This Mus musculus (Mouse) protein is Coiled-coil domain-containing protein 3 (Ccdc3).